Here is a 101-residue protein sequence, read N- to C-terminus: MIRYVLVIITCFLVAAKSHVTIGPVPNNLGFPDRSILLALVAPTCEPELEGLVDECVNNVTIRNVCYDCFREGLTKVYSYCCHKYNHMYEWCLEYFSGEMK.

A signal peptide spans 1-16; that stretch reads MIRYVLVIITCFLVAA.

Contains 3 disulfide bonds. As to expression, expressed by the venom gland.

Its subcellular location is the secreted. In Lychas mucronatus (Chinese swimming scorpion), this protein is Venom protein 214.